The chain runs to 529 residues: Peptide chain release factor 3 (529 aa).

One can recognise a tr-type G domain in the interval 11 to 280 (AARRTFAIIS…GLVAWAPPPM (270 aa)). GTP-binding positions include 20–27 (SHPDAGKT), 88–92 (DTPGH), and 142–145 (NKVD).

This sequence belongs to the TRAFAC class translation factor GTPase superfamily. Classic translation factor GTPase family. PrfC subfamily.

The protein resides in the cytoplasm. Functionally, increases the formation of ribosomal termination complexes and stimulates activities of RF-1 and RF-2. It binds guanine nucleotides and has strong preference for UGA stop codons. It may interact directly with the ribosome. The stimulation of RF-1 and RF-2 is significantly reduced by GTP and GDP, but not by GMP. This is Peptide chain release factor 3 from Sodalis glossinidius (strain morsitans).